A 231-amino-acid chain; its full sequence is 2,3-bisphosphoglycerate-dependent phosphoglycerate mutase (231 aa).

Substrate-binding positions include 10 to 17 (RHGQSEWN), 23 to 24 (TG), Arg62, 89 to 92 (ERHY), Lys100, 116 to 117 (RR), and 185 to 186 (GN). The active-site Tele-phosphohistidine intermediate is the His11. Residue Glu89 is the Proton donor/acceptor of the active site.

It belongs to the phosphoglycerate mutase family. BPG-dependent PGAM subfamily. As to quaternary structure, homodimer.

The enzyme catalyses (2R)-2-phosphoglycerate = (2R)-3-phosphoglycerate. Its pathway is carbohydrate degradation; glycolysis; pyruvate from D-glyceraldehyde 3-phosphate: step 3/5. Its function is as follows. Catalyzes the interconversion of 2-phosphoglycerate and 3-phosphoglycerate. The sequence is that of 2,3-bisphosphoglycerate-dependent phosphoglycerate mutase from Buchnera aphidicola subsp. Acyrthosiphon pisum (strain 5A).